We begin with the raw amino-acid sequence, 172 residues long: Adenine phosphoribosyltransferase (172 aa).

The protein belongs to the purine/pyrimidine phosphoribosyltransferase family. In terms of assembly, homodimer.

The protein localises to the cytoplasm. It catalyses the reaction AMP + diphosphate = 5-phospho-alpha-D-ribose 1-diphosphate + adenine. The protein operates within purine metabolism; AMP biosynthesis via salvage pathway; AMP from adenine: step 1/1. Catalyzes a salvage reaction resulting in the formation of AMP, that is energically less costly than de novo synthesis. This chain is Adenine phosphoribosyltransferase, found in Synechococcus sp. (strain CC9605).